Consider the following 478-residue polypeptide: Tubulin gamma chain (478 aa).

Position 141-147 (141-147 (AGGTGSG)) interacts with GTP. The disordered stretch occupies residues 451-478 (ISQKESSSLANENGNGANNKPGKSAMAL). A compositionally biased stretch (polar residues) spans 459 to 468 (LANENGNGAN).

The protein belongs to the tubulin family.

It is found in the cytoplasm. It localises to the cytoskeleton. The protein localises to the microtubule organizing center. Its subcellular location is the centrosome. In terms of biological role, tubulin is the major constituent of microtubules. The gamma chain is found at microtubule organizing centers (MTOC) such as the spindle poles or the centrosome, suggesting that it is involved in the minus-end nucleation of microtubule assembly. This is Tubulin gamma chain from Reticulomyxa filosa.